Here is a 446-residue protein sequence, read N- to C-terminus: Enolase 1 (446 aa).

Substrate is bound by residues His164 and Glu173. Glu216 serves as the catalytic Proton donor. Mg(2+) is bound by residues Asp251, Glu302, and Asp329. Residues Glu302 and Asp329 each contribute to the substrate site. The active-site Proton acceptor is Lys354. Residues 381–384 and Lys405 contribute to the substrate site; that span reads SHRS.

The protein belongs to the enolase family. In terms of assembly, homodimer. Mg(2+) serves as cofactor.

It is found in the cytoplasm. It catalyses the reaction (2R)-2-phosphoglycerate = phosphoenolpyruvate + H2O. It participates in carbohydrate degradation; glycolysis; pyruvate from D-glyceraldehyde 3-phosphate: step 4/5. The chain is Enolase 1 (ENO1) from Zea mays (Maize).